The sequence spans 426 residues: Serine--tRNA ligase (426 aa).

231 to 233 (TSE) is an L-serine binding site. 262–264 (RSE) contributes to the ATP binding site. Residue Glu-285 participates in L-serine binding. ATP is bound at residue 349-352 (EISS). L-serine is bound at residue Ser-385.

Belongs to the class-II aminoacyl-tRNA synthetase family. Type-1 seryl-tRNA synthetase subfamily. Homodimer. The tRNA molecule binds across the dimer.

Its subcellular location is the cytoplasm. The enzyme catalyses tRNA(Ser) + L-serine + ATP = L-seryl-tRNA(Ser) + AMP + diphosphate + H(+). The catalysed reaction is tRNA(Sec) + L-serine + ATP = L-seryl-tRNA(Sec) + AMP + diphosphate + H(+). Its pathway is aminoacyl-tRNA biosynthesis; selenocysteinyl-tRNA(Sec) biosynthesis; L-seryl-tRNA(Sec) from L-serine and tRNA(Sec): step 1/1. Functionally, catalyzes the attachment of serine to tRNA(Ser). Is also able to aminoacylate tRNA(Sec) with serine, to form the misacylated tRNA L-seryl-tRNA(Sec), which will be further converted into selenocysteinyl-tRNA(Sec). The protein is Serine--tRNA ligase of Legionella pneumophila subsp. pneumophila (strain Philadelphia 1 / ATCC 33152 / DSM 7513).